We begin with the raw amino-acid sequence, 603 residues long: Coagulation factor XII (603 aa).

The first 18 residues, 1 to 18 (GRLLLGSLLVSLESALSA), serve as a signal peptide directing secretion. Positions 41–89 (VTGEPCYFPFQYNRQLYHHCIHKGRPGPRPWCATTPNFDQDQQWAYCLE) constitute a Fibronectin type-II domain. 20 disulfide bridges follow: Cys46-Cys72, Cys60-Cys87, Cys97-Cys109, Cys103-Cys118, Cys120-Cys129, Cys134-Cys162, Cys160-Cys169, Cys177-Cys188, Cys182-Cys197, Cys199-Cys208, Cys216-Cys294, Cys237-Cys276, Cys265-Cys289, Cys345-Cys472, Cys383-Cys399, Cys391-Cys461, Cys422-Cys425, Cys488-Cys557, Cys520-Cys536, and Cys547-Cys578. One can recognise an EGF-like 1 domain in the interval 93–130 (VKDHCSKHNPCQRGGICVNTLSSPHCLCPDHLTGKHCQ). In terms of domain architecture, Fibronectin type-I spans 132-172 (EKCFEPQLHRFFHENEIWFRTGPAGVAKCHCKGPDAHCKQM). One can recognise an EGF-like 2 domain in the interval 173–209 (HSQECQTNPCLNGGRCLEVEGHHLCDCPMGYTGPFCD). The region spanning 216-294 (CYEGRGVSYR…SWEYCDLAQC (79 aa)) is the Kringle domain. 2 N-linked (GlcNAc...) asparagine glycosylation sites follow: Asn248 and Asn270. A Peptidase S1 domain is found at 359-602 (IVGGLVALPG…YLTWIQKHTA (244 aa)). The active-site Charge relay system is His398. An N-linked (GlcNAc...) asparagine glycan is attached at Asn419. Asp447 functions as the Charge relay system in the catalytic mechanism. Ser551 serves as the catalytic Charge relay system.

The protein belongs to the peptidase S1 family. In terms of assembly, interacts with HRG; the interaction, which is enhanced in the presence of zinc ions and inhibited by heparin-binding, inhibits factor XII autoactivation and contact-initiated coagulation. O- and N-glycosylated.

Its subcellular location is the secreted. It catalyses the reaction Selective cleavage of Arg-|-Ile bonds in factor VII to form factor VIIa and factor XI to form factor XIa.. Its activity is regulated as follows. Activity is promoted in the presence of negatively charged surfaces. Its function is as follows. Factor XII is a serum glycoprotein that participates in the initiation of blood coagulation, fibrinolysis, and the generation of bradykinin and angiotensin. Prekallikrein is cleaved by factor XII to form kallikrein, which then cleaves factor XII first to alpha-factor XIIa and then trypsin cleaves it to beta-factor XIIa. Alpha-factor XIIa activates factor XI to factor XIa. This Cavia porcellus (Guinea pig) protein is Coagulation factor XII (F12).